We begin with the raw amino-acid sequence, 425 residues long: UDP-N-acetylglucosamine 1-carboxyvinyltransferase (425 aa).

22-23 serves as a coordination point for phosphoenolpyruvate; that stretch reads KN. Arg91 is a UDP-N-acetyl-alpha-D-glucosamine binding site. The active-site Proton donor is the Cys115. Cys115 carries the post-translational modification 2-(S-cysteinyl)pyruvic acid O-phosphothioketal. UDP-N-acetyl-alpha-D-glucosamine is bound by residues 120–124, Asp309, and Ile331; that span reads RPVDL.

It belongs to the EPSP synthase family. MurA subfamily.

The protein resides in the cytoplasm. It carries out the reaction phosphoenolpyruvate + UDP-N-acetyl-alpha-D-glucosamine = UDP-N-acetyl-3-O-(1-carboxyvinyl)-alpha-D-glucosamine + phosphate. Its pathway is cell wall biogenesis; peptidoglycan biosynthesis. In terms of biological role, cell wall formation. Adds enolpyruvyl to UDP-N-acetylglucosamine. This is UDP-N-acetylglucosamine 1-carboxyvinyltransferase from Akkermansia muciniphila (strain ATCC BAA-835 / DSM 22959 / JCM 33894 / BCRC 81048 / CCUG 64013 / CIP 107961 / Muc).